We begin with the raw amino-acid sequence, 505 residues long: Alkylglycerol monooxygenase (505 aa).

The next 2 membrane-spanning stretches (helical) occupy residues 56–76 (VSAW…ISGH) and 104–124 (AVAI…ELPW). One can recognise a Fatty acid hydroxylase domain in the interval 130-262 (WIFCLFFQDF…FIIWDKMFNT (133 aa)). The Histidine box-1 signature appears at 145–149 (HRAVH). The Histidine box-2 signature appears at 158–162 (HTIHH). The Histidine box-3 signature appears at 234 to 238 (HRVHH). 4 consecutive transmembrane segments (helical) span residues 366-386 (ILVK…FFHF), 396-416 (LDCT…GAFF), 430-450 (CCGV…AGTH), and 452-472 (LFVI…VLVE).

It belongs to the sterol desaturase family. TMEM195 subfamily. Fe cation serves as cofactor.

It is found in the endoplasmic reticulum membrane. The catalysed reaction is 1-O-(1,2-saturated-alkyl)-sn-glycerol + (6R)-L-erythro-5,6,7,8-tetrahydrobiopterin + O2 = a 1-(1-hydroxyalkyl)-sn-glycerol + (6R)-L-erythro-6,7-dihydrobiopterin + H2O. Glyceryl-ether monooxygenase that cleaves the O-alkyl bond of ether lipids. This chain is Alkylglycerol monooxygenase, found in Caenorhabditis elegans.